The primary structure comprises 217 residues: MAETTTKDDKPLFGRPWIFIRGVPSMKFLPPEGPAEIAFAGRSNVGKSSLINALVGHKGLARTSNTPGRTQELNYFVPDGYSGEADDLPPMALVDMPGYGYAQAPKEQVDAWTKLVFDYLRGRSTLKRVYVLIDARHGIKKNDEEVLALLDKAAVSYQIVLTKTDKIKAAGVPRLIAETLDKIKKRPAAYPEVLSTSSEKGAGIEDLRITIEQAVAR.

The EngB-type G domain occupies 33-217 (GPAEIAFAGR…RITIEQAVAR (185 aa)). GTP-binding positions include 41–48 (GRSNVGKS), 68–72 (GRTQE), 95–98 (DMPG), 162–165 (TKTD), and 196–198 (TSS). Residues Ser-48 and Thr-70 each coordinate Mg(2+).

Belongs to the TRAFAC class TrmE-Era-EngA-EngB-Septin-like GTPase superfamily. EngB GTPase family. Mg(2+) serves as cofactor.

Necessary for normal cell division and for the maintenance of normal septation. The protein is Probable GTP-binding protein EngB of Sinorhizobium fredii (strain NBRC 101917 / NGR234).